A 163-amino-acid chain; its full sequence is ADP-ribosylation factor-like protein 2-binding protein (163 aa).

It belongs to the ARL2BP family. As to quaternary structure, interacts with GTP bound ARL2 and ARL3; the complex ARL2-ARL2BP as well as ARL2BP alone, binds to SLC25A4/ANT1. Interaction with ARL2 may be required for cilia basal body localization. Interacts with STAT3; interaction is enhanced with ARL2. Found in a complex with ARL2BP, ARL2 and SLC25A6. Found in a complex with ARL2, ARL2BP and SLC25A4. Interacts with STAT2, STAT3 and STAT4.

The protein localises to the cytoplasm. The protein resides in the mitochondrion intermembrane space. It is found in the cytoskeleton. It localises to the microtubule organizing center. Its subcellular location is the centrosome. The protein localises to the nucleus. The protein resides in the spindle. It is found in the cilium basal body. Together with ARL2, plays a role in the nuclear translocation, retention and transcriptional activity of STAT3. May play a role as an effector of ARL2. The chain is ADP-ribosylation factor-like protein 2-binding protein (ARL2BP) from Pongo abelii (Sumatran orangutan).